Reading from the N-terminus, the 487-residue chain is Bifunctional protein HldE (487 aa).

Residues 1–326 (MERREVESFF…QEIVAEVGHG (326 aa)) form a ribokinase region. An ATP-binding site is contributed by 205–208 (NRKE). Residue aspartate 275 is part of the active site. The tract at residues 356-487 (FTNGCFDLLH…RIIEKILSSY (132 aa)) is cytidylyltransferase.

In the N-terminal section; belongs to the carbohydrate kinase PfkB family. The protein in the C-terminal section; belongs to the cytidylyltransferase family. In terms of assembly, homodimer.

It carries out the reaction D-glycero-beta-D-manno-heptose 7-phosphate + ATP = D-glycero-beta-D-manno-heptose 1,7-bisphosphate + ADP + H(+). The enzyme catalyses D-glycero-beta-D-manno-heptose 1-phosphate + ATP + H(+) = ADP-D-glycero-beta-D-manno-heptose + diphosphate. The protein operates within nucleotide-sugar biosynthesis; ADP-L-glycero-beta-D-manno-heptose biosynthesis; ADP-L-glycero-beta-D-manno-heptose from D-glycero-beta-D-manno-heptose 7-phosphate: step 1/4. Its pathway is nucleotide-sugar biosynthesis; ADP-L-glycero-beta-D-manno-heptose biosynthesis; ADP-L-glycero-beta-D-manno-heptose from D-glycero-beta-D-manno-heptose 7-phosphate: step 3/4. Catalyzes the phosphorylation of D-glycero-D-manno-heptose 7-phosphate at the C-1 position to selectively form D-glycero-beta-D-manno-heptose-1,7-bisphosphate. Functionally, catalyzes the ADP transfer from ATP to D-glycero-beta-D-manno-heptose 1-phosphate, yielding ADP-D-glycero-beta-D-manno-heptose. The chain is Bifunctional protein HldE from Citrifermentans bemidjiense (strain ATCC BAA-1014 / DSM 16622 / JCM 12645 / Bem) (Geobacter bemidjiensis).